Here is a 442-residue protein sequence, read N- to C-terminus: Glycolipid 2-alpha-mannosyltransferase (442 aa).

The Cytoplasmic portion of the chain corresponds to 1 to 11 (MALFLSKRLLR). A helical; Signal-anchor for type II membrane protein transmembrane segment spans residues 12–30 (FTVIAGAVIVLLLTLNSNS). The stem region stretch occupies residues 31-118 (RTQQYIPSSI…YITPSFANKA (88 aa)). The Lumenal portion of the chain corresponds to 31–442 (RTQQYIPSSI…KPKNWKKFRE (412 aa)). The interval 68-95 (EQSALNSEASEDSEAMDEESKALKAAAE) is disordered. The segment covering 85-95 (EESKALKAAAE) has biased composition (basic and acidic residues). Residues 119-442 (GKPKACYVTL…KPKNWKKFRE (324 aa)) are catalytic. N-linked (GlcNAc...) asparagine glycosylation is present at Asn197. The Nucleophile role is filled by Glu329.

The protein belongs to the glycosyltransferase 15 family. Mn(2+) serves as cofactor.

The protein localises to the golgi apparatus membrane. Its pathway is protein modification; protein glycosylation. Its function is as follows. Mannosyltransferase that transfers an alpha-D-mannosyl residue from GDP-mannose into lipid-linked oligosaccharide, forming an alpha-(1-&gt;2)-D-mannosyl-D-mannose linkage. Required for the attachment of the third mannose residue of O-linked saccharides. The protein is Glycolipid 2-alpha-mannosyltransferase (KRE2) of Saccharomyces cerevisiae (strain ATCC 204508 / S288c) (Baker's yeast).